The chain runs to 215 residues: Adenylate kinase (215 aa).

10–15 (GAGKGT) contributes to the ATP binding site. Residues 30 to 59 (STGDMFRAAMKNETEMGKLAKSFIDKGELV) form an NMP region. Residues T31, R36, 57-59 (ELV), 86-89 (GYPR), and Q93 each bind AMP. Positions 127–165 (GRYICRNCGATYHKIFNPTKVEGVCDVCGSHDLYQRADD) are LID. R128 lines the ATP pocket. C131 and C134 together coordinate Zn(2+). Residue 137–138 (TY) coordinates ATP. The Zn(2+) site is built by C151 and C154. AMP contacts are provided by R162 and R173. Q201 contributes to the ATP binding site.

This sequence belongs to the adenylate kinase family. In terms of assembly, monomer.

The protein resides in the cytoplasm. It carries out the reaction AMP + ATP = 2 ADP. It functions in the pathway purine metabolism; AMP biosynthesis via salvage pathway; AMP from ADP: step 1/1. In terms of biological role, catalyzes the reversible transfer of the terminal phosphate group between ATP and AMP. Plays an important role in cellular energy homeostasis and in adenine nucleotide metabolism. The protein is Adenylate kinase of Lactococcus lactis subsp. lactis (strain IL1403) (Streptococcus lactis).